We begin with the raw amino-acid sequence, 524 residues long: Unconventional prefoldin RPB5 interactor (524 aa).

Disordered stretches follow at residues Met-1 to Pro-20, Ser-284 to Ser-320, and Val-335 to Met-373. Acidic residues predominate over residues Asp-296–Ser-307. Position 361 is a phosphoserine; by RPS6KB1 (Ser-361). Ser-431 carries the phosphoserine modification.

Belongs to the RNA polymerase II subunit 5-mediating protein family. As to quaternary structure, homodimer. Component of the PAQosome complex which is responsible for the biogenesis of several protein complexes and which consists of R2TP complex members RUVBL1, RUVBL2, RPAP3 and PIH1D1, URI complex members PFDN2, PFDN6, PDRG1, UXT and URI1 as well as ASDURF, POLR2E and DNAAF10/WDR92. Interacts with POLR2E/RPB5, RUVBL2 and RUVBL1. Interacts with PFDN2, PFDN4 and STAP1; the interactions are phosphorylation-dependent and occur in a growth-dependent manner in the mitochondrion. Interacts with UXT. Interacts with PPP1CC; the interaction is phosphorylation-dependent and occurs in a growth factor-dependent manner. Interacts (via the middle C-terminal region) with GTF2F1 and GTF2F2. Interacts with DMAP1. Interacts with TSC1 and TSC2. Interacts with PRPF8 and EFTUD2 in a ZNHIT2-dependent manner. Post-translationally, phosphorylated. Phosphorylation occurs essentially on serine residues. Phosphorylation occurs in response to androgen treatment in prostate cancer cells in a mTOR-dependent manner. Phosphorylated; hyperhosphorylated in mitochondria in a mTORC-dependent signaling pathway. Phosphorylated at Ser-361 by RPS6KB1 in a growth factor- and rapamycin-dependent manner. S6K1-mediated mitochondrial phosphorylation at Ser-361 disrupts the URI1-PPP1CC complex in the mitochondrion, relieves PPP1CC phosphatase inhibition activity and hence engages a negative feedback diminishing RPS6KB1 kinase activity, preventing sustained S6K1-dependent signaling.

The protein resides in the nucleus. Its subcellular location is the cytoplasm. The protein localises to the mitochondrion. It is found in the cell projection. It localises to the dendrite. Functionally, involved in gene transcription regulation. Acts as a transcriptional repressor in concert with the corepressor UXT to regulate androgen receptor (AR) transcription. May act as a tumor suppressor to repress AR-mediated gene transcription and to inhibit anchorage-independent growth in prostate cancer cells. Required for cell survival in ovarian cancer cells. Together with UXT, associates with chromatin to the NKX3-1 promoter region. In terms of biological role, plays a central role in maintaining S6K1 signaling and BAD phosphorylation under normal growth conditions thereby protecting cells from potential deleterious effects of sustained S6K1 signaling. The URI1-PPP1CC complex acts as a central component of a negative feedback mechanism that counteracts excessive S6K1 survival signaling to BAD in response to growth factors. Mediates inhibition of PPP1CC phosphatase activity in mitochondria. Coordinates the regulation of nutrient-sensitive gene expression availability in a mTOR-dependent manner. Seems to be a scaffolding protein able to assemble a prefoldin-like complex that contains PFDs and proteins with roles in transcription and ubiquitination. The polypeptide is Unconventional prefoldin RPB5 interactor (URI1) (Bos taurus (Bovine)).